The chain runs to 279 residues: 30 kDa ribonucleoprotein, chloroplastic (279 aa).

An RRM 1 domain is found at 87 to 165 (LKIFVGNLLF…RALRVNSGPP (79 aa)). The interval 156–187 (RALRVNSGPPPEKRENSSFRENSSFRGGSRGG) is disordered. Residues 166–193 (PEKRENSSFRENSSFRGGSRGGGSFDSS) form a linker (Gly-rich) region. One can recognise an RRM 2 domain in the interval 194–272 (NRVYVGNLAW…RAIRVSPAEA (79 aa)).

Expressed at high levels in the leaves and seedlings, and lower levels are seen in the stems and roots.

It localises to the plastid. Its subcellular location is the chloroplast. Could be involved in splicing and/or processing of chloroplast RNA's. The polypeptide is 30 kDa ribonucleoprotein, chloroplastic (Nicotiana plumbaginifolia (Leadwort-leaved tobacco)).